Here is a 196-residue protein sequence, read N- to C-terminus: Putative NADH dehydrogenase/NAD(P)H nitroreductase Smal_0358 (196 aa).

The protein belongs to the nitroreductase family. HadB/RutE subfamily. FMN is required as a cofactor.

In Stenotrophomonas maltophilia (strain R551-3), this protein is Putative NADH dehydrogenase/NAD(P)H nitroreductase Smal_0358.